The primary structure comprises 64 residues: Large ribosomal subunit protein bL35 (64 aa).

The protein belongs to the bacterial ribosomal protein bL35 family.

The chain is Large ribosomal subunit protein bL35 from Desulforudis audaxviator (strain MP104C).